We begin with the raw amino-acid sequence, 144 residues long: Transcription antitermination protein NusB (144 aa).

It belongs to the NusB family.

Involved in transcription antitermination. Required for transcription of ribosomal RNA (rRNA) genes. Binds specifically to the boxA antiterminator sequence of the ribosomal RNA (rrn) operons. The sequence is that of Transcription antitermination protein NusB from Dictyoglomus thermophilum (strain ATCC 35947 / DSM 3960 / H-6-12).